The chain runs to 262 residues: Shikimate dehydrogenase (NADP(+)) (262 aa).

Residues 15–17 (SRS) and Thr62 each bind shikimate. Lys66 functions as the Proton acceptor in the catalytic mechanism. Glu78 is an NADP(+) binding site. The shikimate site is built by Asn87 and Asp102. NADP(+)-binding positions include 126 to 130 (GAGGA), 150 to 155 (NRTLAR), and Met214. Residue Tyr216 coordinates shikimate. Gly236 contributes to the NADP(+) binding site.

It belongs to the shikimate dehydrogenase family. Homodimer.

The catalysed reaction is shikimate + NADP(+) = 3-dehydroshikimate + NADPH + H(+). It functions in the pathway metabolic intermediate biosynthesis; chorismate biosynthesis; chorismate from D-erythrose 4-phosphate and phosphoenolpyruvate: step 4/7. Its function is as follows. Involved in the biosynthesis of the chorismate, which leads to the biosynthesis of aromatic amino acids. Catalyzes the reversible NADPH linked reduction of 3-dehydroshikimate (DHSA) to yield shikimate (SA). This is Shikimate dehydrogenase (NADP(+)) from Acinetobacter baumannii (strain AB307-0294).